The following is a 261-amino-acid chain: MKPAGDVATRVIPCLDVDGGRVVKGVNFANLRDAGDPVELAAAYDAEGADELTFLDVTASSSGRATMLDVVRRTAEQVFIPLTVGGGVRSVADVDALLRAGADKVSVNTAAIARPELLSELSRQFGSQCIVLSVDARTVPEGSQPTPSGWEVTTHGGRRGTGIDAVEWAVQGAELGVGEILLNSMDADGTKAGFDLEMLRAVRGAVTVPVIASGGAGAVEHFAPAVAAGADAVLAASVFHFGELTIGQVKAAMKAEGITVR.

Active-site residues include Asp-16 and Asp-135.

Belongs to the HisA/HisF family. Heterodimer of HisH and HisF.

The protein localises to the cytoplasm. The catalysed reaction is 5-[(5-phospho-1-deoxy-D-ribulos-1-ylimino)methylamino]-1-(5-phospho-beta-D-ribosyl)imidazole-4-carboxamide + L-glutamine = D-erythro-1-(imidazol-4-yl)glycerol 3-phosphate + 5-amino-1-(5-phospho-beta-D-ribosyl)imidazole-4-carboxamide + L-glutamate + H(+). It participates in amino-acid biosynthesis; L-histidine biosynthesis; L-histidine from 5-phospho-alpha-D-ribose 1-diphosphate: step 5/9. Functionally, IGPS catalyzes the conversion of PRFAR and glutamine to IGP, AICAR and glutamate. The HisF subunit catalyzes the cyclization activity that produces IGP and AICAR from PRFAR using the ammonia provided by the HisH subunit. The sequence is that of Imidazole glycerol phosphate synthase subunit HisF from Mycolicibacterium vanbaalenii (strain DSM 7251 / JCM 13017 / BCRC 16820 / KCTC 9966 / NRRL B-24157 / PYR-1) (Mycobacterium vanbaalenii).